A 59-amino-acid polypeptide reads, in one-letter code: Large ribosomal subunit protein bL32 (59 aa).

The interval 1–20 is disordered; it reads MAVPRNRHSNARKNIRRSHH.

Belongs to the bacterial ribosomal protein bL32 family.

This is Large ribosomal subunit protein bL32 from Chlamydia trachomatis serovar A (strain ATCC VR-571B / DSM 19440 / HAR-13).